The sequence spans 400 residues: Acetate kinase (400 aa).

N10 contributes to the Mg(2+) binding site. K17 provides a ligand contact to ATP. A substrate-binding site is contributed by R91. The Proton donor/acceptor role is filled by D150. ATP is bound by residues H210 to G214, D285 to R287, and G333 to N337. E387 is a binding site for Mg(2+).

It belongs to the acetokinase family. In terms of assembly, homodimer. The cofactor is Mg(2+). Requires Mn(2+) as cofactor.

It localises to the cytoplasm. The enzyme catalyses acetate + ATP = acetyl phosphate + ADP. It functions in the pathway metabolic intermediate biosynthesis; acetyl-CoA biosynthesis; acetyl-CoA from acetate: step 1/2. Catalyzes the formation of acetyl phosphate from acetate and ATP. Can also catalyze the reverse reaction. The protein is Acetate kinase of Cronobacter sakazakii (strain ATCC BAA-894) (Enterobacter sakazakii).